Consider the following 463-residue polypeptide: mRNA-capping enzyme subunit alpha (463 aa).

The active-site N6-GMP-lysine intermediate is lysine 66. The tract at residues 404 to 463 (WEERKSKKRTHSSISGPMLPPVAETKAPREATQSRYIDDEDWSDEADDDDEDSLKRARIE) is disordered. The span at 441 to 455 (DDEDWSDEADDDDED) shows a compositional bias: acidic residues.

This sequence belongs to the eukaryotic GTase family. Heterodimer. The mRNA-capping enzyme is composed of two separate chains alpha and beta, respectively a mRNA guanylyltransferase and an mRNA 5'-triphosphate monophosphatase.

It localises to the nucleus. It carries out the reaction a 5'-end diphospho-ribonucleoside in mRNA + GTP + H(+) = a 5'-end (5'-triphosphoguanosine)-ribonucleoside in mRNA + diphosphate. In terms of biological role, second step of mRNA capping. Transfer of the GMP moiety of GTP to the 5'-end of RNA via an enzyme-GMP covalent reaction intermediate. The chain is mRNA-capping enzyme subunit alpha (CEG1) from Eremothecium gossypii (strain ATCC 10895 / CBS 109.51 / FGSC 9923 / NRRL Y-1056) (Yeast).